Consider the following 218-residue polypeptide: Large ribosomal subunit protein uL3 (218 aa).

The protein belongs to the universal ribosomal protein uL3 family. Part of the 50S ribosomal subunit. Forms a cluster with proteins L14 and L19.

In terms of biological role, one of the primary rRNA binding proteins, it binds directly near the 3'-end of the 23S rRNA, where it nucleates assembly of the 50S subunit. This Corynebacterium glutamicum (strain R) protein is Large ribosomal subunit protein uL3.